The primary structure comprises 467 residues: Protein PHOSPHATE STARVATION RESPONSE 3 (467 aa).

Positions Met-227 to Pro-266 are disordered. Residues Ser-262–Tyr-322 enclose the HTH myb-type domain. The H-T-H motif DNA-binding region spans Pro-293–Arg-318. The segment covering Lys-327–Thr-337 has biased composition (basic and acidic residues). Disordered stretches follow at residues Lys-327–Gln-353 and Arg-400–Glu-467. A compositionally biased stretch (polar residues) spans Ser-402–Gly-412. Basic and acidic residues-rich tracts occupy residues Pro-419–Glu-428 and Arg-438–Glu-467.

It localises to the nucleus. Its function is as follows. Transcription factor involved in phosphate starvation signaling. Binds to P1BS, an imperfect palindromic sequence 5'-GNATATNC-3', to promote the expression of inorganic phosphate (Pi) starvation-responsive genes. Functionally redundant with PHR1 and PHR2 in regulating Pi starvation response and Pi homeostasis. The protein is Protein PHOSPHATE STARVATION RESPONSE 3 of Oryza sativa subsp. indica (Rice).